The primary structure comprises 360 residues: Magnesium-chelatase subunit ChlI (360 aa).

50 to 57 lines the ATP pocket; sequence GDRGTGKS. Cysteine 285 and cysteine 327 are oxidised to a cystine.

This sequence belongs to the Mg-chelatase subunits D/I family. The magnesium chelatase complex is a heterotrimer consisting of subunits CHLI, CHLD and CHLH.

The protein localises to the plastid. Its subcellular location is the chloroplast. The catalysed reaction is protoporphyrin IX + Mg(2+) + ATP + H2O = Mg-protoporphyrin IX + ADP + phosphate + 3 H(+). It participates in porphyrin-containing compound metabolism; chlorophyll biosynthesis. With respect to regulation, redox regulation; active in reducing conditions, inactive in oxidizing conditions. Thioredoxins f and m mediate the reversible reductive activation of oxidized CHLI. Functionally, involved in chlorophyll biosynthesis. Catalyzes the insertion of magnesium ion into protoporphyrin IX to yield Mg-protoporphyrin IX. The magnesium-chelatase is a complex of three subunits, CHLI, CHLD and CHLH. The reaction takes place in two steps, with an ATP-dependent activation followed by an ATP-dependent chelation step. The chain is Magnesium-chelatase subunit ChlI (chlI) from Mesostigma viride (Green alga).